Here is a 324-residue protein sequence, read N- to C-terminus: Aquaporin-4 (324 aa).

At 1 to 36 the chain is on the cytoplasmic side; the sequence is MSDRPAARPWGKCGSLCRREEIMVAFKGVWTQAFWK. S-palmitoyl cysteine attachment occurs at residues cysteine 13 and cysteine 17. The chain crosses the membrane as a helical span at residues 37-57; that stretch reads AVTAEFLAMLIFVLLSLGSTI. Residues 58 to 69 lie on the Extracellular side of the membrane; the sequence is NWGGKENPLPVD. A helical membrane pass occupies residues 70-89; that stretch reads MVLISLCFGLSIATMVQCFG. Residues 90-93 are Cytoplasmic-facing; that stretch reads HISG. An intramembrane region (discontinuously helical) is located at residues 94–101; the sequence is GHINPAVT. The NPA 1 signature appears at 97 to 99; that stretch reads NPA. Residues 102-115 are Cytoplasmic-facing; it reads VAMVCTRKISIAKS. Serine 111 carries the phosphoserine; by PKG modification. Residues 116-136 form a helical membrane-spanning segment; that stretch reads VFYIAAQCLGAIIGAGILYLV. Over 137-155 the chain is Extracellular; that stretch reads TPPSVVGGLGVTTVHGNLT. Residue asparagine 153 is glycosylated (N-linked (GlcNAc...) asparagine). A helical membrane pass occupies residues 156 to 176; that stretch reads AGHGLLVELIITFQLVFTIFA. The Cytoplasmic segment spans residues 177 to 184; the sequence is SCDSKRTD. Serine 180 is modified (phosphoserine; by PKC). A helical membrane pass occupies residues 185–205; the sequence is VTGSIALAIGFSVAIGHLFAI. Asparagine 206 is a glycosylation site (N-linked (GlcNAc...) asparagine). Residues 206 to 208 lie on the Extracellular side of the membrane; it reads NYT. Residues 209 to 222 constitute an intramembrane region (discontinuously helical); the sequence is GASMNPARSFGPAV. Positions 213–215 match the NPA 2 motif; it reads NPA. Topologically, residues 223 to 231 are extracellular; it reads IMGNWENHW. A helical transmembrane segment spans residues 232 to 252; sequence IYWVGPIIGAVLAGGLYEYVF. The Cytoplasmic segment spans residues 253–324; the sequence is CPDVELKRRF…PSGEIAQTQH (72 aa). Residues serine 276 and serine 285 each carry the phosphoserine modification. Threonine 289 carries the phosphothreonine modification. The span at 305–316 shows a compositional bias: basic and acidic residues; it reads DRGDEKKGKDPS. Positions 305–324 are disordered; it reads DRGDEKKGKDPSGEIAQTQH.

This sequence belongs to the MIP/aquaporin (TC 1.A.8) family. Homotetramer. The tetramers can form oligomeric arrays in membranes. The size of the oligomers differs between tissues and is smaller in skeletal muscle than in brain. Interaction between AQP4 oligomeric arrays in close-by cells can contribute to cell-cell adhesion. Part of a complex containing MLC1, TRPV4, HEPACAM and ATP1B1. Post-translationally, phosphorylation by PKC at Ser-180 reduces conductance by 50%. Phosphorylation by PKG at Ser-111 in response to glutamate increases conductance by 40%. In terms of processing, isoform 2: Palmitoylated on its N-terminal region. Isoform 1: Not palmitoylated. In terms of tissue distribution, not expressed in kidney, Detectable in gastric parietal and brain astroglial cells. The absence of AQP4 in kidney may be critical for the extreme urinary concentration that occurs in this species (up to 5,000 mosmol/kg H(2)O).

The protein resides in the cell membrane. Its subcellular location is the basolateral cell membrane. It is found in the endosome membrane. It localises to the sarcolemma. The protein localises to the cell projection. The enzyme catalyses H2O(in) = H2O(out). Forms a water-specific channel. Plays an important role in brain water homeostasis and in glymphatic solute transport. Required for a normal rate of water exchange across the blood brain interface. Required for normal levels of cerebrospinal fluid influx into the brain cortex and parenchyma along paravascular spaces that surround penetrating arteries, and for normal drainage of interstitial fluid along paravenous drainage pathways. Thereby, it is required for normal clearance of solutes from the brain interstitial fluid, including soluble beta-amyloid peptides derived from APP. Plays a redundant role in urinary water homeostasis and urinary concentrating ability. The protein is Aquaporin-4 (AQP4) of Dipodomys merriami (Merriam's kangaroo rat).